The primary structure comprises 130 residues: Sec-independent protein translocase protein TatB (130 aa).

The chain crosses the membrane as a helical span at residues 1–21; it reads MFDIGFWELVLIFVVGLVVLG. Residues 85-130 are disordered; sequence LKQAAQSVNRPYADVSAKNEATSSSSSDATHQTEATKTSAANTKSE. A compositionally biased stretch (polar residues) spans 112 to 130; it reads DATHQTEATKTSAANTKSE.

Belongs to the TatB family. In terms of assembly, the Tat system comprises two distinct complexes: a TatABC complex, containing multiple copies of TatA, TatB and TatC subunits, and a separate TatA complex, containing only TatA subunits. Substrates initially bind to the TatABC complex, which probably triggers association of the separate TatA complex to form the active translocon.

It is found in the cell inner membrane. Part of the twin-arginine translocation (Tat) system that transports large folded proteins containing a characteristic twin-arginine motif in their signal peptide across membranes. Together with TatC, TatB is part of a receptor directly interacting with Tat signal peptides. TatB may form an oligomeric binding site that transiently accommodates folded Tat precursor proteins before their translocation. The polypeptide is Sec-independent protein translocase protein TatB (Vibrio vulnificus (strain CMCP6)).